Consider the following 403-residue polypeptide: Odorant receptor 43b (403 aa).

Residues 1–49 (MFGHFKLVYPAPISEPIQSRDSNAYMMETLRNSGLNLKNDFGIGRKIWR) lie on the Cytoplasmic side of the membrane. Residues 50–70 (VFSFTYNMVILPVSFPINYVI) traverse the membrane as a helical segment. Over 71–83 (HLAEFPPELLLQS) the chain is Extracellular. Residues 84–104 (LQLCLNTWCFALKFFTLIVYT) traverse the membrane as a helical segment. Topologically, residues 105–139 (HRLELANKHFDELDKYCVKPAEKRKVRDMVATITR) are cytoplasmic. A helical membrane pass occupies residues 140–160 (LYLTFVVVYVLYATSTLLDGL). The Extracellular portion of the chain corresponds to 161–193 (LHHRVPYNTYYPFINWRVDRTQMYIQSFLEYFT). Residues 194–214 (VGYAIYVATATDSYPVIYVAA) form a helical membrane-spanning segment. The Cytoplasmic segment spans residues 215 to 271 (LRTHILLLKDRIIYLGDPSNEGSSDPSYMFKSLVDCIKAHRTMLNFCDAIQPIISGT). Residues 272–292 (IFAQFIICGSILGIIMINMVL) form a helical membrane-spanning segment. Residues 293–299 (FADQSTR) are Extracellular-facing. Residues 300 to 320 (FGIVIYVMAVLLQTFPLCFYC) traverse the membrane as a helical segment. Topologically, residues 321–372 (NAIVDDCKELAHALFHSAWWVQDKRYQRTVIQFLQKLQQPMTFTAMNIFNIN) are cytoplasmic. A helical transmembrane segment spans residues 373 to 393 (LATNINVAKFAFTVYAIASGM). Topologically, residues 394-403 (NLDQKLSIKE) are extracellular.

Belongs to the insect chemoreceptor superfamily. Heteromeric odorant receptor channel (TC 1.A.69) family. Or2a subfamily. As to quaternary structure, interacts with Orco. Complexes exist early in the endomembrane system in olfactory sensory neurons (OSNs), coupling these complexes to the conserved ciliary trafficking pathway. In terms of tissue distribution, expressed in 16 olfactory receptor neurons in a broad area across the antenna, including both anterior and posterior faces and in the maxillary palp. This expression pattern matches the distribution of the small sensilla basiconica. Expression in the antenna is observed late in antennal development at 93 hours APF.

The protein localises to the cell membrane. In terms of biological role, odorant receptor which mediates acceptance or avoidance behavior, depending on its substrates. The odorant receptor repertoire encodes a large collection of odor stimuli that vary widely in identity, intensity, and duration. May form a complex with Orco to form odorant-sensing units, providing sensitive and prolonged odorant signaling and calcium permeability. The sequence is that of Odorant receptor 43b (Or43b) from Drosophila melanogaster (Fruit fly).